The following is a 342-amino-acid chain: Glyceraldehyde-3-phosphate dehydrogenase (342 aa).

NAD(+)-binding positions include arginine 12–isoleucine 13, aspartate 34, lysine 78, and threonine 120. Residues serine 151–threonine 153 and threonine 182 contribute to the D-glyceraldehyde 3-phosphate site. Cysteine 152 (nucleophile) is an active-site residue. Asparagine 183 is an NAD(+) binding site. Residues arginine 197, threonine 210–glycine 211, and arginine 233 each bind D-glyceraldehyde 3-phosphate. Asparagine 322 contacts NAD(+).

The protein belongs to the glyceraldehyde-3-phosphate dehydrogenase family. As to quaternary structure, homotetramer.

The protein localises to the cytoplasm. The catalysed reaction is D-glyceraldehyde 3-phosphate + phosphate + NAD(+) = (2R)-3-phospho-glyceroyl phosphate + NADH + H(+). The protein operates within carbohydrate degradation; glycolysis; pyruvate from D-glyceraldehyde 3-phosphate: step 1/5. Catalyzes the oxidative phosphorylation of glyceraldehyde 3-phosphate (G3P) to 1,3-bisphosphoglycerate (BPG) using the cofactor NAD. The first reaction step involves the formation of a hemiacetal intermediate between G3P and a cysteine residue, and this hemiacetal intermediate is then oxidized to a thioester, with concomitant reduction of NAD to NADH. The reduced NADH is then exchanged with the second NAD, and the thioester is attacked by a nucleophilic inorganic phosphate to produce BPG. The sequence is that of Glyceraldehyde-3-phosphate dehydrogenase (gap) from Aquifex aeolicus (strain VF5).